Reading from the N-terminus, the 316-residue chain is tRNA dimethylallyltransferase (316 aa).

Residue 17 to 24 (GPTASGKT) participates in ATP binding. 19 to 24 (TASGKT) contributes to the substrate binding site. Interaction with substrate tRNA regions lie at residues 42 to 45 (DSAL), 166 to 170 (QRLSR), 247 to 252 (RCVGYR), and 280 to 287 (KRQITWLR).

The protein belongs to the IPP transferase family. As to quaternary structure, monomer. The cofactor is Mg(2+).

The catalysed reaction is adenosine(37) in tRNA + dimethylallyl diphosphate = N(6)-dimethylallyladenosine(37) in tRNA + diphosphate. Its function is as follows. Catalyzes the transfer of a dimethylallyl group onto the adenine at position 37 in tRNAs that read codons beginning with uridine, leading to the formation of N6-(dimethylallyl)adenosine (i(6)A). The protein is tRNA dimethylallyltransferase of Shigella flexneri serotype 5b (strain 8401).